The chain runs to 239 residues: Adenylate dimethylallyltransferase (239 aa).

This sequence belongs to the isopentenyl transferase family.

It carries out the reaction dimethylallyl diphosphate + AMP = N(6)-(dimethylallyl)adenosine 5'-phosphate + diphosphate. Functionally, transfers dimethylallyl groups to AMP as part of the biosynthesis of cytokinin phytohormones. This chain is Adenylate dimethylallyltransferase (ipt), found in Rhizobium radiobacter (Agrobacterium tumefaciens).